Here is a 187-residue protein sequence, read N- to C-terminus: ECF RNA polymerase sigma factor SigK (187 aa).

The sigma-70 factor domain-2 stretch occupies residues tyrosine 30–glutamine 96. Positions glutamate 53–glutamine 56 match the Interaction with polymerase core subunit RpoC motif. Residues cysteine 133–asparagine 182 are sigma-70 factor domain-4. The H-T-H motif DNA-binding region spans tyrosine 155 to arginine 174.

It belongs to the sigma-70 factor family. ECF subfamily. As to quaternary structure, interacts transiently with the RNA polymerase catalytic core formed by RpoA, RpoB, RpoC and RpoZ (2 alpha, 1 beta, 1 beta' and 1 omega subunit) to form the RNA polymerase holoenzyme that can initiate transcription. Interacts (via sigma-70 factor domain 4) with anti-sigma-K factor RskA.

Its function is as follows. Sigma factors are initiation factors that promote the attachment of RNA polymerase to specific initiation sites and are then released. Extracytoplasmic function (ECF) sigma factors are held in an inactive form by an anti-sigma factor until released by regulated intramembrane proteolysis. The chain is ECF RNA polymerase sigma factor SigK (sigK) from Mycobacterium tuberculosis (strain ATCC 25177 / H37Ra).